Reading from the N-terminus, the 307-residue chain is Peroxisomal membrane protein PMP34 (307 aa).

The Cytoplasmic segment spans residues 1–9 (MASVLSYES). A necessary for targeting to peroxisomes and interaction with PEX19 region spans residues 1 to 147 (MASVLSYESL…NEDIIPTNYK (147 aa)). Solcar repeat units lie at residues 7–92 (YESL…LKAV), 99–192 (SSTG…LKRQ), and 200–294 (LSSL…LTAA). A helical transmembrane segment spans residues 10-30 (LVHAVAGAVGSVTAMTVFFPL). The Lumenal segment spans residues 31-66 (DTARLRLQVDEKRKSKTTHAVLLEIIKEEGLLAPYR). The helical transmembrane segment at 67 to 87 (GWFPVISSLCCSNFVYFYTFN) threads the bilayer. The Cytoplasmic portion of the chain corresponds to 88-104 (SLKAVWVKGQRSSTGKD). Residues 105–125 (LVVGFVAGVVNVLLTTPLWVV) traverse the membrane as a helical segment. Residues 126–160 (NTRLKLQGAKFRNEDIIPTNYKGIIDAFHQIIRDE) are Lumenal-facing. A helical transmembrane segment spans residues 161–181 (GILALWNGTFPSLLLVFNPAI). Residues 182 to 202 (QFMFYEGLKRQLLKKRMKLSS) lie on the Cytoplasmic side of the membrane. The Peroxisome localization signal motif lies at 190–199 (KRQLLKKRMK). A helical membrane pass occupies residues 203–223 (LDVFIIGAIAKAIATTVTYPM). The Lumenal segment spans residues 224–280 (QTVQSILRFGRHRLNPENRTLGSLRNVLSLLHQRVKRFGIMGLYKGLEAKLLQTVLT). Positions 244-307 (LGSLRNVLSL…VMGLKSTHKH (64 aa)) are necessary for targeting to peroxisomes and interaction with PEX19. A helical membrane pass occupies residues 281–301 (AALMFLVYEKLTAATFTVMGL). The Cytoplasmic segment spans residues 302–307 (KSTHKH).

It belongs to the mitochondrial carrier (TC 2.A.29) family. Interacts (via N- and C-terminus peroxisomal targeting regions) with PEX19; the interaction occurs with the newly synthesized SLC25A17 in the cytosol. In terms of tissue distribution, expressed in liver, kidney, heart, spleen, muscle and lung.

The protein resides in the cytoplasm. The protein localises to the peroxisome membrane. The catalysed reaction is AMP(out) + CoA(in) = AMP(in) + CoA(out). It carries out the reaction 3'-dephospho-CoA(in) + AMP(out) = 3'-dephospho-CoA(out) + AMP(in). It catalyses the reaction acetyl-CoA(in) + AMP(out) = acetyl-CoA(out) + AMP(in). The enzyme catalyses AMP(in) + NAD(+)(out) = AMP(out) + NAD(+)(in). The catalysed reaction is FAD(in) + AMP(out) = FAD(out) + AMP(in). It carries out the reaction FMN(in) + AMP(out) = FMN(out) + AMP(in). It catalyses the reaction AMP(in) + ADP(out) = AMP(out) + ADP(in). The enzyme catalyses adenosine 3',5'-bisphosphate(in) + AMP(out) = adenosine 3',5'-bisphosphate(out) + AMP(in). The catalysed reaction is FAD(in) + CoA(out) = FAD(out) + CoA(in). It carries out the reaction FAD(in) + adenosine 3',5'-bisphosphate(out) = FAD(out) + adenosine 3',5'-bisphosphate(in). It catalyses the reaction FMN(in) + CoA(out) = FMN(out) + CoA(in). The enzyme catalyses FMN(in) + adenosine 3',5'-bisphosphate(out) = FMN(out) + adenosine 3',5'-bisphosphate(in). The catalysed reaction is FAD(out) + NAD(+)(in) = FAD(in) + NAD(+)(out). It carries out the reaction FMN(out) + NAD(+)(in) = FMN(in) + NAD(+)(out). It catalyses the reaction NAD(+)(in) + CoA(out) = NAD(+)(out) + CoA(in). The enzyme catalyses adenosine 3',5'-bisphosphate(out) + NAD(+)(in) = adenosine 3',5'-bisphosphate(in) + NAD(+)(out). The catalysed reaction is FMN(out) + ADP(in) = FMN(in) + ADP(out). It carries out the reaction FAD(out) + ADP(in) = FAD(in) + ADP(out). It catalyses the reaction ADP(out) + CoA(in) = ADP(in) + CoA(out). The enzyme catalyses adenosine 3',5'-bisphosphate(in) + ADP(out) = adenosine 3',5'-bisphosphate(out) + ADP(in). Its function is as follows. Peroxisomal transporter for multiple cofactors like coenzyme A (CoA), flavin adenine dinucleotide (FAD), flavin mononucleotide (FMN) and nucleotide adenosine monophosphate (AMP), and to a lesser extent for nicotinamide adenine dinucleotide (NAD(+)), adenosine diphosphate (ADP) and adenosine 3',5'-diphosphate (PAP). May catalyze the transport of free CoA, FAD and NAD(+) from the cytosol into the peroxisomal matrix by a counter-exchange mechanism. In Mus musculus (Mouse), this protein is Peroxisomal membrane protein PMP34 (Slc25a17).